The sequence spans 399 residues: Formate-dependent phosphoribosylglycinamide formyltransferase (399 aa).

N(1)-(5-phospho-beta-D-ribosyl)glycinamide contacts are provided by residues 8 to 9 (EL) and glutamate 68. Residues arginine 100, lysine 141, 146-151 (SSGHGQ), 185-188 (EALA), and glutamate 193 contribute to the ATP site. Residues 105-308 (VLAHEELGLP…EFALHARAIL (204 aa)) form the ATP-grasp domain. Positions 266 and 279 each coordinate Mg(2+). N(1)-(5-phospho-beta-D-ribosyl)glycinamide-binding positions include aspartate 286, lysine 361, and 368–369 (RR).

Belongs to the PurK/PurT family. In terms of assembly, homodimer.

The enzyme catalyses N(1)-(5-phospho-beta-D-ribosyl)glycinamide + formate + ATP = N(2)-formyl-N(1)-(5-phospho-beta-D-ribosyl)glycinamide + ADP + phosphate + H(+). It functions in the pathway purine metabolism; IMP biosynthesis via de novo pathway; N(2)-formyl-N(1)-(5-phospho-D-ribosyl)glycinamide from N(1)-(5-phospho-D-ribosyl)glycinamide (formate route): step 1/1. Its function is as follows. Involved in the de novo purine biosynthesis. Catalyzes the transfer of formate to 5-phospho-ribosyl-glycinamide (GAR), producing 5-phospho-ribosyl-N-formylglycinamide (FGAR). Formate is provided by PurU via hydrolysis of 10-formyl-tetrahydrofolate. This chain is Formate-dependent phosphoribosylglycinamide formyltransferase, found in Bifidobacterium longum (strain NCC 2705).